A 448-amino-acid chain; its full sequence is Velvet complex subunit 2 (448 aa).

2 disordered regions span residues 1-153 (MNSA…SKIE) and 224-306 (EPGT…NGYG). The span at 15 to 34 (PGPAYSSSAPPPIHTYQQHQ) shows a compositional bias: low complexity. Pro residues-rich tracts occupy residues 35–44 (HPPPPLPPPS) and 52–61 (PPLPPPPSAP). Residues 96-107 (APYQQSQPSQYP) are compositionally biased toward low complexity. The span at 116–132 (VPPPSQHDEPPPPPSSG) shows a compositional bias: pro residues. The 277-residue stretch at 155 to 431 (GSGWKYSLDV…ANQGIKIPIR (277 aa)) folds into the Velvet domain. Over residues 260–292 (QQSYGPAPSYPPSSSYGPPQQYYPRHSGYSAEP) the composition is skewed to low complexity.

The protein belongs to the velvet family. VelB subfamily. As to quaternary structure, component of the heterotrimeric velvet complex composed of LAE1, VE1 and VELB; VE1 acting as a bridging protein between LAE1 and VEL2. Interacts with VE1. Forms a heterodimeric complex with VOS1; the formation of the VELB-VOS1 complex is light-dependent.

Its subcellular location is the nucleus. The protein resides in the cytoplasm. Functionally, component of the velvet transcription factor complex that controls sexual/asexual developmental ratio in response to light, promoting sexual development in the darkness while stimulating asexual sporulation under illumination. The velvet complex acts as a global regulator for secondary metabolite gene expression. Component of the VELB-VOS1 heterodimeric complex that plays a dual role in activating genes associated with spore maturation and repressing certain development-associated genes. The VELB-VOS1 complex binds DNA through the DNA-binding domain of VOS1 that recognizes an 11-nucleotide consensus sequence 5'-CTGGCCGCGGC-3' consisting of two motifs in the promoters of key developmental regulatory genes. Controls the expression of the fumonisins gene cluster. Involved in cell wall integrity, cell surface hydrophobicity, hyphal polarity and conidiation pattern. Involved in oxidative stress resistance by positively regulating the transcription of the catalase-encoding gene CAT2. The chain is Velvet complex subunit 2 from Gibberella moniliformis (strain M3125 / FGSC 7600) (Maize ear and stalk rot fungus).